The following is a 465-amino-acid chain: uncharacterized protein (465 aa).

One can recognise an RAMA domain in the interval 6–91 (NVTLSNLIDF…LKLKREYLFR (86 aa)). 2 disordered regions span residues 95–377 (TGKN…SNNQ) and 392–465 (YNQQ…KSKS). A compositionally biased stretch (low complexity) spans 117 to 137 (PQQQQQQQQQQQQQQQQQQQP). Residues 156-169 (ETSDQDIDNDDDDA) are compositionally biased toward acidic residues. Residues 177–190 (TTTTTTTTTTTTTT) are compositionally biased toward low complexity. Residues 208 to 220 (PKEKKKEKKENIL) show a composition bias toward basic and acidic residues. A coiled-coil region spans residues 214 to 242 (EKKENILTKKKQQSLQYQQQLQLLQRQNS). The span at 226-263 (QSLQYQQQLQLLQRQNSPPSVSPSSSTSTSSSTSSPAS) shows a compositional bias: low complexity. The segment covering 264 to 294 (NQIFNSFGPNSQNHNQYGINYNSQQHQPQQY) has biased composition (polar residues). Over residues 295–376 (NNNNNNNNNN…NNNINNNSNN (82 aa)) the composition is skewed to low complexity. Residues 392–407 (YNQQNPPKHQYPNNFL) show a composition bias toward polar residues. Over residues 424 to 442 (NQSQNQNQNQNQNQNQNQK) the composition is skewed to low complexity. Residues 443–465 (SKSKSKSKSKFKSKSKSKSKSKS) show a composition bias toward basic residues.

This is an uncharacterized protein from Dictyostelium discoideum (Social amoeba).